Here is a 1058-residue protein sequence, read N- to C-terminus: Carbamoyl phosphate synthase large chain (1058 aa).

Positions 1–401 (MPKRTDIQKI…SLLKACRSLE (401 aa)) are carboxyphosphate synthetic domain. The ATP site is built by arginine 129, arginine 169, glycine 175, glycine 176, arginine 208, isoleucine 210, glutamate 215, glycine 241, isoleucine 242, histidine 243, glutamine 284, and glutamate 298. The ATP-grasp 1 domain maps to 133–327 (KQLMEELEQP…IAKLAAKIAV (195 aa)). 3 residues coordinate Mg(2+): glutamine 284, glutamate 298, and asparagine 300. Mn(2+) is bound by residues glutamine 284, glutamate 298, and asparagine 300. Residues 402 to 546 (IGVHHNEIPE…YSTYGWENES (145 aa)) are oligomerization domain. The interval 547–929 (IRSDKESVLV…ALYKAFEASY (383 aa)) is carbamoyl phosphate synthetic domain. One can recognise an ATP-grasp 2 domain in the interval 671-861 (EQALKELDIP…MAQVATKLIL (191 aa)). The ATP site is built by arginine 707, serine 746, isoleucine 748, glutamate 752, glycine 777, valine 778, histidine 779, serine 780, glutamine 820, and glutamate 832. Mg(2+) contacts are provided by glutamine 820, glutamate 832, and asparagine 834. 3 residues coordinate Mn(2+): glutamine 820, glutamate 832, and asparagine 834. The 129-residue stretch at 930–1058 (LHLPTFGNVV…ESRSFVTEAI (129 aa)) folds into the MGS-like domain. Residues 930 to 1058 (LHLPTFGNVV…ESRSFVTEAI (129 aa)) form an allosteric domain region.

This sequence belongs to the CarB family. Composed of two chains; the small (or glutamine) chain promotes the hydrolysis of glutamine to ammonia, which is used by the large (or ammonia) chain to synthesize carbamoyl phosphate. Tetramer of heterodimers (alpha,beta)4. The cofactor is Mg(2+). Requires Mn(2+) as cofactor.

The enzyme catalyses hydrogencarbonate + L-glutamine + 2 ATP + H2O = carbamoyl phosphate + L-glutamate + 2 ADP + phosphate + 2 H(+). It catalyses the reaction hydrogencarbonate + NH4(+) + 2 ATP = carbamoyl phosphate + 2 ADP + phosphate + 2 H(+). It participates in amino-acid biosynthesis; L-arginine biosynthesis; carbamoyl phosphate from bicarbonate: step 1/1. It functions in the pathway pyrimidine metabolism; UMP biosynthesis via de novo pathway; (S)-dihydroorotate from bicarbonate: step 1/3. Its function is as follows. Large subunit of the glutamine-dependent carbamoyl phosphate synthetase (CPSase). CPSase catalyzes the formation of carbamoyl phosphate from the ammonia moiety of glutamine, carbonate, and phosphate donated by ATP, constituting the first step of 2 biosynthetic pathways, one leading to arginine and/or urea and the other to pyrimidine nucleotides. The large subunit (synthetase) binds the substrates ammonia (free or transferred from glutamine from the small subunit), hydrogencarbonate and ATP and carries out an ATP-coupled ligase reaction, activating hydrogencarbonate by forming carboxy phosphate which reacts with ammonia to form carbamoyl phosphate. This is Carbamoyl phosphate synthase large chain from Streptococcus pneumoniae (strain 70585).